A 99-amino-acid polypeptide reads, in one-letter code: Aspartyl/glutamyl-tRNA(Asn/Gln) amidotransferase subunit C (99 aa).

Belongs to the GatC family. Heterotrimer of A, B and C subunits.

It carries out the reaction L-glutamyl-tRNA(Gln) + L-glutamine + ATP + H2O = L-glutaminyl-tRNA(Gln) + L-glutamate + ADP + phosphate + H(+). The enzyme catalyses L-aspartyl-tRNA(Asn) + L-glutamine + ATP + H2O = L-asparaginyl-tRNA(Asn) + L-glutamate + ADP + phosphate + 2 H(+). Allows the formation of correctly charged Asn-tRNA(Asn) or Gln-tRNA(Gln) through the transamidation of misacylated Asp-tRNA(Asn) or Glu-tRNA(Gln) in organisms which lack either or both of asparaginyl-tRNA or glutaminyl-tRNA synthetases. The reaction takes place in the presence of glutamine and ATP through an activated phospho-Asp-tRNA(Asn) or phospho-Glu-tRNA(Gln). The polypeptide is Aspartyl/glutamyl-tRNA(Asn/Gln) amidotransferase subunit C (Corynebacterium efficiens (strain DSM 44549 / YS-314 / AJ 12310 / JCM 11189 / NBRC 100395)).